The following is a 228-amino-acid chain: Glyceraldehyde 3-phosphate phosphatase (228 aa).

It belongs to the HAD-like hydrolase superfamily. Requires Mg(2+) as cofactor.

Its function is as follows. Catalyzes the dephosphorylation of D,L-glyceraldehyde 3-phosphate in vitro. In Methanocaldococcus jannaschii (strain ATCC 43067 / DSM 2661 / JAL-1 / JCM 10045 / NBRC 100440) (Methanococcus jannaschii), this protein is Glyceraldehyde 3-phosphate phosphatase.